Consider the following 379-residue polypeptide: Glucose-1-phosphate adenylyltransferase (379 aa).

Residues G164, E179–K180, and S190 contribute to the alpha-D-glucose 1-phosphate site.

It belongs to the bacterial/plant glucose-1-phosphate adenylyltransferase family. In terms of assembly, homotetramer.

It catalyses the reaction alpha-D-glucose 1-phosphate + ATP + H(+) = ADP-alpha-D-glucose + diphosphate. It functions in the pathway glycan biosynthesis; glycogen biosynthesis. Its function is as follows. Involved in the biosynthesis of ADP-glucose, a building block required for the elongation reactions to produce glycogen. Catalyzes the reaction between ATP and alpha-D-glucose 1-phosphate (G1P) to produce pyrophosphate and ADP-Glc. The sequence is that of Glucose-1-phosphate adenylyltransferase from Streptococcus equi subsp. zooepidemicus (strain H70).